Here is a 315-residue protein sequence, read N- to C-terminus: Methionyl-tRNA formyltransferase (315 aa).

113–116 (SLLP) lines the (6S)-5,6,7,8-tetrahydrofolate pocket.

Belongs to the Fmt family.

It carries out the reaction L-methionyl-tRNA(fMet) + (6R)-10-formyltetrahydrofolate = N-formyl-L-methionyl-tRNA(fMet) + (6S)-5,6,7,8-tetrahydrofolate + H(+). Attaches a formyl group to the free amino group of methionyl-tRNA(fMet). The formyl group appears to play a dual role in the initiator identity of N-formylmethionyl-tRNA by promoting its recognition by IF2 and preventing the misappropriation of this tRNA by the elongation apparatus. The protein is Methionyl-tRNA formyltransferase of Escherichia fergusonii (strain ATCC 35469 / DSM 13698 / CCUG 18766 / IAM 14443 / JCM 21226 / LMG 7866 / NBRC 102419 / NCTC 12128 / CDC 0568-73).